The chain runs to 531 residues: Bifunctional aspartate aminotransferase and L-aspartate beta-decarboxylase (531 aa).

Gly114 and Asn255 together coordinate L-aspartate. Residue Lys314 is modified to N6-(pyridoxal phosphate)lysine. Arg496 contributes to the L-aspartate binding site.

This sequence belongs to the class-I pyridoxal-phosphate-dependent aminotransferase family. Homododecamer. The cofactor is pyridoxal 5'-phosphate.

The enzyme catalyses L-aspartate + H(+) = L-alanine + CO2. It catalyses the reaction L-aspartate + 2-oxoglutarate = oxaloacetate + L-glutamate. Its activity is regulated as follows. Inhibited by 10 mM Co(2+), Mn(2+) and Ni(2+), and by 1 mM Cu(2+) and Hg(2+). Bifunctional enzyme that has both L-aspartate decarboxylase and transaminase activity. Has high activity with L-aspartate, and much lower activity with D-aspartate, L-lysine and L-glutamine. This chain is Bifunctional aspartate aminotransferase and L-aspartate beta-decarboxylase, found in Pseudomonas sp.